Reading from the N-terminus, the 458-residue chain is Probable threonine--tRNA ligase, cytoplasmic (458 aa).

Positions 41–104 constitute a TGS domain; it reads DPIKITLLPD…EGDCSLEIFG (64 aa).

The protein belongs to the class-II aminoacyl-tRNA synthetase family.

The protein localises to the cytoplasm. It carries out the reaction tRNA(Thr) + L-threonine + ATP = L-threonyl-tRNA(Thr) + AMP + diphosphate + H(+). The protein is Probable threonine--tRNA ligase, cytoplasmic of Arabidopsis thaliana (Mouse-ear cress).